The primary structure comprises 425 residues: Glutamyl-tRNA reductase (425 aa).

Residues Thr-47–Arg-50, Ser-107, Glu-112–Gln-114, and Gln-118 contribute to the substrate site. Catalysis depends on Cys-48, which acts as the Nucleophile. An NADP(+)-binding site is contributed by Gly-187–Ala-192.

It belongs to the glutamyl-tRNA reductase family. As to quaternary structure, homodimer.

The enzyme catalyses (S)-4-amino-5-oxopentanoate + tRNA(Glu) + NADP(+) = L-glutamyl-tRNA(Glu) + NADPH + H(+). The protein operates within porphyrin-containing compound metabolism; protoporphyrin-IX biosynthesis; 5-aminolevulinate from L-glutamyl-tRNA(Glu): step 1/2. Its pathway is porphyrin-containing compound metabolism; chlorophyll biosynthesis. Its function is as follows. Catalyzes the NADPH-dependent reduction of glutamyl-tRNA(Glu) to glutamate 1-semialdehyde (GSA). The chain is Glutamyl-tRNA reductase from Roseiflexus sp. (strain RS-1).